Consider the following 292-residue polypeptide: Nucleotide-binding protein AZOSEA20610 (292 aa).

ATP is bound at residue Gly-8–Ser-15. A GTP-binding site is contributed by Asp-57–Ser-60.

This sequence belongs to the RapZ-like family.

Displays ATPase and GTPase activities. The polypeptide is Nucleotide-binding protein AZOSEA20610 (Aromatoleum aromaticum (strain DSM 19018 / LMG 30748 / EbN1) (Azoarcus sp. (strain EbN1))).